A 52-amino-acid polypeptide reads, in one-letter code: Large ribosomal subunit protein bL32c (52 aa).

Belongs to the bacterial ribosomal protein bL32 family.

Its subcellular location is the plastid. The protein resides in the chloroplast. In Aethionema grandiflorum (Persian stone-cress), this protein is Large ribosomal subunit protein bL32c.